Reading from the N-terminus, the 160-residue chain is MKTSVLLAITAMCSDDWLLVRMKIRPFDKNTDIRIGDIHLRDNCPVTRLLSFNYAFSYPVTSCGIKKIMFQTNDDAILSEISYKPRLHTTYEFPVVCFVKRLKFPSVMHFGMSGFDAHTLKEIPQKTKGQESPTPTQSKTWTLNFNSVNKEQLSKKSLYQ.

A signal peptide spans 1–13 (MKTSVLLAITAMC).

Belongs to the PLAC1 family.

Its subcellular location is the secreted. The chain is Oocyte-secreted protein 4B from Homo sapiens (Human).